We begin with the raw amino-acid sequence, 394 residues long: MSLLDTLQRGLADLDAQGLRRVRRIADTACDARMTVNGREIVGFASNDYLGLAAHPALVAAFAEGAQRYGSGSGGSHLLGGHSRAHARLEDELAGFAGGFSDAPRALYFSTGYMANLAAMTALAGKGATIFSDALNHASLIDGMRLSRANVQVYPHADTAALAALLDASEAETKLIVSDTVFSMDGDVAPLAELVALAERHGAWLVVDDAHGFGVLGPQGRGALAAAALRSPHLVYVGTLGKAAGVAGAFVIAHETVIEWLIQRARSYIFTTAAPPAVAHAVSASLKVIAGDEGDARRAHLAALIERTRALLRNTRWQPVDSHTAVQPLVIGSNDATLAAMRALDAHGLWVPAIRPPTVPAGTSRLRVSLSAAHSFDDFARLEAALIEASEAAA.

A substrate-binding site is contributed by arginine 21. Glycine 112 to tyrosine 113 contacts pyridoxal 5'-phosphate. Histidine 137 contributes to the substrate binding site. Serine 183, histidine 211, and threonine 239 together coordinate pyridoxal 5'-phosphate. Residue lysine 242 is modified to N6-(pyridoxal phosphate)lysine. Threonine 358 contributes to the substrate binding site.

This sequence belongs to the class-II pyridoxal-phosphate-dependent aminotransferase family. BioF subfamily. In terms of assembly, homodimer. Pyridoxal 5'-phosphate is required as a cofactor.

It carries out the reaction 6-carboxyhexanoyl-[ACP] + L-alanine + H(+) = (8S)-8-amino-7-oxononanoate + holo-[ACP] + CO2. It participates in cofactor biosynthesis; biotin biosynthesis. Functionally, catalyzes the decarboxylative condensation of pimeloyl-[acyl-carrier protein] and L-alanine to produce 8-amino-7-oxononanoate (AON), [acyl-carrier protein], and carbon dioxide. This Burkholderia cenocepacia (strain ATCC BAA-245 / DSM 16553 / LMG 16656 / NCTC 13227 / J2315 / CF5610) (Burkholderia cepacia (strain J2315)) protein is 8-amino-7-oxononanoate synthase.